We begin with the raw amino-acid sequence, 64 residues long: Prokaryotic ubiquitin-like protein Pup (64 aa).

Over residues 1-11 (MAQEQTKRGGG) the composition is skewed to basic and acidic residues. Positions 1-37 (MAQEQTKRGGGGDDEDDFASSTAAGQERREKLAEDTD) are disordered. Residues 21–58 (STAAGQERREKLAEDTDDLLDEIDDVLEENAEDFVRAY) are ARC ATPase binding. The stretch at 24 to 52 (AGQERREKLAEDTDDLLDEIDDVLEENAE) forms a coiled coil. Position 64 is a deamidated glutamine (glutamine 64). Glutamine 64 is covalently cross-linked (Isoglutamyl lysine isopeptide (Gln-Lys) (interchain with K-? in acceptor proteins)).

The protein belongs to the prokaryotic ubiquitin-like protein family. As to quaternary structure, strongly interacts with the proteasome-associated ATPase ARC through a hydrophobic interface; the interacting region of Pup lies in its C-terminal half. There is one Pup binding site per ARC hexamer ring. Post-translationally, is modified by deamidation of its C-terminal glutamine to glutamate by the deamidase Dop, a prerequisite to the subsequent pupylation process.

It participates in protein degradation; proteasomal Pup-dependent pathway. Functionally, protein modifier that is covalently attached to lysine residues of substrate proteins, thereby targeting them for proteasomal degradation. The tagging system is termed pupylation. The polypeptide is Prokaryotic ubiquitin-like protein Pup (Mycolicibacterium paratuberculosis (strain ATCC BAA-968 / K-10) (Mycobacterium paratuberculosis)).